A 416-amino-acid chain; its full sequence is 3-phosphoshikimate 1-carboxyvinyltransferase (416 aa).

3-phosphoshikimate is bound by residues K20, S21, and R25. K20 is a binding site for phosphoenolpyruvate. G88 and R116 together coordinate phosphoenolpyruvate. The 3-phosphoshikimate site is built by S159, S160, Q161, S186, D300, and K327. Residue Q161 participates in phosphoenolpyruvate binding. Catalysis depends on D300, which acts as the Proton acceptor. Phosphoenolpyruvate contacts are provided by R331 and R373.

This sequence belongs to the EPSP synthase family. In terms of assembly, monomer.

It is found in the cytoplasm. The catalysed reaction is 3-phosphoshikimate + phosphoenolpyruvate = 5-O-(1-carboxyvinyl)-3-phosphoshikimate + phosphate. Its pathway is metabolic intermediate biosynthesis; chorismate biosynthesis. Its function is as follows. Catalyzes the transfer of the enolpyruvyl moiety of phosphoenolpyruvate (PEP) to the 5-hydroxyl of shikimate-3-phosphate (S3P) to produce enolpyruvyl shikimate-3-phosphate and inorganic phosphate. The protein is 3-phosphoshikimate 1-carboxyvinyltransferase of Archaeoglobus fulgidus (strain ATCC 49558 / DSM 4304 / JCM 9628 / NBRC 100126 / VC-16).